The following is a 199-amino-acid chain: Recombination protein RecR (199 aa).

Residues 57-72 (CSICGNFTDRDPCRLC) form a C4-type zinc finger. The Toprim domain occupies 80–175 (SCICVVEEAR…KVTRLAYGLP (96 aa)).

Belongs to the RecR family.

In terms of biological role, may play a role in DNA repair. It seems to be involved in an RecBC-independent recombinational process of DNA repair. It may act with RecF and RecO. This chain is Recombination protein RecR, found in Moorella thermoacetica (strain ATCC 39073 / JCM 9320).